Reading from the N-terminus, the 743-residue chain is Ribosome biogenesis protein BOP1 homolog (743 aa).

WD repeat units follow at residues 365-404 (GHTATVRSVSVSPNGQYLATGCDDHLVRVYEVQTGRLMKR), 575-615 (KFSE…RRFK), 617-655 (SGGVTTCLSIHPEGDNFLVGDTTSHTSWFDMDFSDKPYK), 659-701 (SHKG…DYNK), and 712-743 (KHQRSVYAVAWHPSLAWLFTSTEDGVVTAWTE).

This sequence belongs to the WD repeat BOP1/ERB1 family.

The protein resides in the nucleus. The protein localises to the nucleolus. It is found in the nucleoplasm. Its function is as follows. Required for maturation of ribosomal RNAs and formation of the large ribosomal subunit. The chain is Ribosome biogenesis protein BOP1 homolog from Leishmania braziliensis.